A 254-amino-acid chain; its full sequence is Homeobox protein Nkx-6.3 (254 aa).

Disordered regions lie at residues 112-140 (QDWR…RPTF) and 191-228 (KSAV…DPDS). Polar residues predominate over residues 120 to 129 (ALSSASNTEG). A DNA-binding region (homeobox) is located at residues 133-192 (KKHTRPTFTGHQIFALEKTFEQTKYLAGPERARLAFSLGMSESQVKVWFQNRRTKWRKKS).

The protein resides in the nucleus. Functionally, putative transcription factor, which may be involved in patterning of central nervous system and pancreas. The protein is Homeobox protein Nkx-6.3 (nkx6-3) of Xenopus laevis (African clawed frog).